Consider the following 1193-residue polypeptide: DNA-directed RNA polymerase subunit beta (1193 aa).

Acidic residues predominate over residues glutamate 1149–aspartate 1162. The tract at residues glutamate 1149 to glutamate 1193 is disordered. A compositionally biased stretch (basic and acidic residues) spans aspartate 1184 to glutamate 1193.

This sequence belongs to the RNA polymerase beta chain family. RNAP is composed of a core of 2 alpha, a beta and a beta' subunit. The core is associated with a delta subunit, and at least one of epsilon or omega. When a sigma factor is associated with the core the holoenzyme is formed, which can initiate transcription.

The catalysed reaction is RNA(n) + a ribonucleoside 5'-triphosphate = RNA(n+1) + diphosphate. DNA-dependent RNA polymerase catalyzes the transcription of DNA into RNA using the four ribonucleoside triphosphates as substrates. This is DNA-directed RNA polymerase subunit beta from Bacillus subtilis (strain 168).